A 147-amino-acid chain; its full sequence is Large ribosomal subunit protein uL16c (147 aa).

A compositionally biased stretch (basic residues) spans 1–17 (MLSPKRTRFRKQHRGRM). Positions 1-20 (MLSPKRTRFRKQHRGRMKGI) are disordered.

It belongs to the universal ribosomal protein uL16 family. In terms of assembly, part of the 50S ribosomal subunit.

It is found in the plastid. The protein localises to the chloroplast. This chain is Large ribosomal subunit protein uL16c, found in Ipomoea purpurea (Common morning glory).